The sequence spans 129 residues: D-ribose pyranase 1 (129 aa).

H20 acts as the Proton donor in catalysis. Residues D28, H96, and 118–120 (YSN) each bind substrate.

Belongs to the RbsD / FucU family. RbsD subfamily. Homodecamer.

It localises to the cytoplasm. It carries out the reaction beta-D-ribopyranose = beta-D-ribofuranose. Its pathway is carbohydrate metabolism; D-ribose degradation; D-ribose 5-phosphate from beta-D-ribopyranose: step 1/2. In terms of biological role, catalyzes the interconversion of beta-pyran and beta-furan forms of D-ribose. This is D-ribose pyranase 1 from Rubrobacter xylanophilus (strain DSM 9941 / JCM 11954 / NBRC 16129 / PRD-1).